A 564-amino-acid chain; its full sequence is MSTLKITGMTCDSCAVHVKDALEKVPGVQSADVSYAKGSAKLAIEVGTSPDALTAAVAGLGYRATLADAPSVSTPGGLLDKMRDLLGRNDKTGSSGALHIAVIGSGGAAMAAALKAVEQGARVTLIERGTIGGTCVNVGCVPSKIMIRAAHIAHLRRESPFDGGIAATTPTIQRTALLAQQQARVDELRHAKYEGILEGNPAITVLHGSARFKDNRNLIVQLNDGGERVVAFDRCLIATGASPAVPPIPGLKDTPYWTSTEALVSETIPKRLAVIGSSVVALELAQAFARLGAKVTILARSTLFFREDPAIGEAVTAAFRMEGIEVREHTQASQVAYINGVRDGEFVLTTAHGELRADKLLVATGRAPNTRKLALDATGVTLTPQGAIVIDPGMRTSVEHIYAAGDCTDQPQFVYVAAAAGTRAAINMTGGDAALNLTAMPAVVFTDPQVATVGYSEAEAHHDGIKTDSRTLTLDNVPRALANFDTRGFIKLVVEEGSGRLIGVQAVAPEAGELIQTAALAIRNRMTVQELADQLFPYLTMVEGLKLAAQTFNKDVKQLSCCAG.

Residues 1-65 (MSTLKITGMT…AVAGLGYRAT (65 aa)) form the HMA domain. Residues Cys11 and Cys14 each coordinate a metal cation. Residues Ala109, Gly129, and Thr134 each coordinate FAD. The cysteines at positions 135 and 140 are disulfide-linked. 4 residues coordinate FAD: Lys144, Ala210, Asp406, and Val414. The Hg(2+) site is built by Cys561 and Cys562.

The protein belongs to the class-I pyridine nucleotide-disulfide oxidoreductase family. Homodimer. FAD is required as a cofactor.

The enzyme catalyses Hg + NADP(+) + H(+) = Hg(2+) + NADPH. Functionally, resistance to Hg(2+) in bacteria appears to be governed by a specialized system which includes mercuric reductase. MerA protein is responsible for volatilizing mercury as Hg(0). The protein is Mercuric reductase (merA) of Shigella flexneri.